The primary structure comprises 130 residues: UPF0251 protein Swol_2090 (130 aa).

Belongs to the UPF0251 family.

The sequence is that of UPF0251 protein Swol_2090 from Syntrophomonas wolfei subsp. wolfei (strain DSM 2245B / Goettingen).